Reading from the N-terminus, the 108-residue chain is UPF0060 membrane protein RHOS4_03690 (108 aa).

4 helical membrane passes run 5–25 (LAAY…VWAW), 32–52 (ALWL…LALT), 62–82 (AVYG…VEGV), and 86–106 (RWDM…LWAP).

It belongs to the UPF0060 family.

The protein localises to the cell inner membrane. This is UPF0060 membrane protein RHOS4_03690 from Cereibacter sphaeroides (strain ATCC 17023 / DSM 158 / JCM 6121 / CCUG 31486 / LMG 2827 / NBRC 12203 / NCIMB 8253 / ATH 2.4.1.) (Rhodobacter sphaeroides).